The sequence spans 294 residues: GTP cyclohydrolase FolE2 (294 aa).

This sequence belongs to the GTP cyclohydrolase IV family.

The catalysed reaction is GTP + H2O = 7,8-dihydroneopterin 3'-triphosphate + formate + H(+). It participates in cofactor biosynthesis; 7,8-dihydroneopterin triphosphate biosynthesis; 7,8-dihydroneopterin triphosphate from GTP: step 1/1. In terms of biological role, converts GTP to 7,8-dihydroneopterin triphosphate. The chain is GTP cyclohydrolase FolE2 from Acinetobacter baylyi (strain ATCC 33305 / BD413 / ADP1).